The primary structure comprises 376 residues: Succinyl-diaminopimelate desuccinylase (376 aa).

His74 contributes to the Zn(2+) binding site. Residue Asp76 is part of the active site. Asp105 is a Zn(2+) binding site. The active-site Proton acceptor is the Glu135. Residues Glu136, Glu164, and His349 each contribute to the Zn(2+) site.

It belongs to the peptidase M20A family. DapE subfamily. Homodimer. It depends on Zn(2+) as a cofactor. The cofactor is Co(2+).

The enzyme catalyses N-succinyl-(2S,6S)-2,6-diaminopimelate + H2O = (2S,6S)-2,6-diaminopimelate + succinate. It functions in the pathway amino-acid biosynthesis; L-lysine biosynthesis via DAP pathway; LL-2,6-diaminopimelate from (S)-tetrahydrodipicolinate (succinylase route): step 3/3. Catalyzes the hydrolysis of N-succinyl-L,L-diaminopimelic acid (SDAP), forming succinate and LL-2,6-diaminopimelate (DAP), an intermediate involved in the bacterial biosynthesis of lysine and meso-diaminopimelic acid, an essential component of bacterial cell walls. This is Succinyl-diaminopimelate desuccinylase from Zymomonas mobilis subsp. mobilis (strain ATCC 31821 / ZM4 / CP4).